The primary structure comprises 201 residues: MGKIIGITGGIASGKSTVTNFLRQQGFQVVDADAVVHQLQKPGGRLFEALVQHFGQEIILENGELNRPLLASLIFSNPDEREWSKQIQGEIIREELATLREQLAQTEEIFFMDIPLLFEQDYSDWFAETWLVYVDRDAQVERLMKRDQLSKDEAESRLAAQWPLEKKKDLASQVLDNNGNQNQLLNQVHILLEGGRQDDRD.

Residues 4–201 (IIGITGGIAS…LEGGRQDDRD (198 aa)) enclose the DPCK domain. 12–17 (ASGKST) lines the ATP pocket.

It belongs to the CoaE family.

Its subcellular location is the cytoplasm. It carries out the reaction 3'-dephospho-CoA + ATP = ADP + CoA + H(+). It functions in the pathway cofactor biosynthesis; coenzyme A biosynthesis; CoA from (R)-pantothenate: step 5/5. Functionally, catalyzes the phosphorylation of the 3'-hydroxyl group of dephosphocoenzyme A to form coenzyme A. The chain is Dephospho-CoA kinase from Streptococcus pneumoniae serotype 4 (strain ATCC BAA-334 / TIGR4).